The sequence spans 347 residues: (RS)-norcoclaurine 6-O-methyltransferase (347 aa).

S-adenosyl-L-methionine-binding residues include glycine 192, aspartate 215, aspartate 235, methionine 236, and lysine 249. Histidine 253 serves as the catalytic Proton acceptor.

Belongs to the class I-like SAM-binding methyltransferase superfamily. Cation-independent O-methyltransferase family. COMT subfamily. In terms of assembly, homodimer.

The enzyme catalyses norcoclaurine + S-adenosyl-L-methionine = coclaurine + S-adenosyl-L-homocysteine + H(+). The protein operates within alkaloid biosynthesis; (S)-reticuline biosynthesis; (S)-reticuline from (S)-norcoclaurine: step 1/4. Functionally, catalyzes the transfer of the S-methyl group of S-adenosyl-L-methionine (AdoMet) to the 6-hydroxyl group of norcoclaurine to form coclaurine. This chain is (RS)-norcoclaurine 6-O-methyltransferase, found in Coptis japonica (Japanese goldthread).